The following is a 32-amino-acid chain: Cathepsin B-like cysteine proteinase (32 aa).

Residues 1-22 (KPNYKRQFEPFSDELIHYINLE) constitute a propeptide, activation peptide.

It belongs to the peptidase C1 family.

Functionally, thiol protease. In Fasciola hepatica (Liver fluke), this protein is Cathepsin B-like cysteine proteinase.